The chain runs to 278 residues: Urease accessory protein UreD (278 aa).

The protein belongs to the UreD family. In terms of assembly, ureD, UreF and UreG form a complex that acts as a GTP-hydrolysis-dependent molecular chaperone, activating the urease apoprotein by helping to assemble the nickel containing metallocenter of UreC. The UreE protein probably delivers the nickel.

It is found in the cytoplasm. Functionally, required for maturation of urease via the functional incorporation of the urease nickel metallocenter. This chain is Urease accessory protein UreD, found in Staphylococcus aureus (strain JH1).